A 199-amino-acid chain; its full sequence is dITP/XTP pyrophosphatase (199 aa).

8–13 (TSNKNK) serves as a coordination point for substrate. 2 residues coordinate Mg(2+): Glu-40 and Asp-68. Asp-68 serves as the catalytic Proton acceptor. Substrate-binding positions include Ser-69, 154-157 (FGYD), Lys-177, and 182-183 (HR).

Belongs to the HAM1 NTPase family. In terms of assembly, homodimer. Mg(2+) is required as a cofactor.

The enzyme catalyses XTP + H2O = XMP + diphosphate + H(+). It catalyses the reaction dITP + H2O = dIMP + diphosphate + H(+). It carries out the reaction ITP + H2O = IMP + diphosphate + H(+). Functionally, pyrophosphatase that catalyzes the hydrolysis of nucleoside triphosphates to their monophosphate derivatives, with a high preference for the non-canonical purine nucleotides XTP (xanthosine triphosphate), dITP (deoxyinosine triphosphate) and ITP. Seems to function as a house-cleaning enzyme that removes non-canonical purine nucleotides from the nucleotide pool, thus preventing their incorporation into DNA/RNA and avoiding chromosomal lesions. The protein is dITP/XTP pyrophosphatase of Wigglesworthia glossinidia brevipalpis.